Reading from the N-terminus, the 517-residue chain is Ribose import ATP-binding protein RbsA (517 aa).

ABC transporter domains are found at residues 11-251 (LEMR…VGRD) and 263-507 (YDPG…ALAT). 43–50 (GENGAGKS) serves as a coordination point for ATP.

Belongs to the ABC transporter superfamily. Ribose importer (TC 3.A.1.2.1) family. As to quaternary structure, the complex is composed of an ATP-binding protein (RbsA), two transmembrane proteins (RbsC) and a solute-binding protein (RbsB).

The protein localises to the cell inner membrane. It catalyses the reaction D-ribose(out) + ATP + H2O = D-ribose(in) + ADP + phosphate + H(+). In terms of biological role, part of the ABC transporter complex RbsABC involved in ribose import. Responsible for energy coupling to the transport system. In Burkholderia pseudomallei (strain K96243), this protein is Ribose import ATP-binding protein RbsA.